Reading from the N-terminus, the 332-residue chain is uncharacterized protein (332 aa).

The protein belongs to the bacterial solute-binding protein 1 family. WtpA subfamily.

This is an uncharacterized protein from Methanococcus maripaludis (strain DSM 14266 / JCM 13030 / NBRC 101832 / S2 / LL).